A 618-amino-acid polypeptide reads, in one-letter code: Indolepyruvate oxidoreductase subunit IorA (618 aa).

4Fe-4S ferredoxin-type domains are found at residues 558–587 and 588–617; these read GRPMAVDGEKCDLCLECIRDLACPAMVTRE and GEVFIDPLKCRGCSVCLQICPAGAIKPEGK. [4Fe-4S] cluster is bound by residues Cys-568, Cys-571, Cys-574, Cys-580, Cys-597, Cys-600, Cys-603, and Cys-607.

Heterodimer of the IorA and IorB subunits. The cofactor is [4Fe-4S] cluster.

It carries out the reaction indole-3-pyruvate + 2 oxidized [2Fe-2S]-[ferredoxin] + CoA = (indol-3-yl)acetyl-CoA + 2 reduced [2Fe-2S]-[ferredoxin] + CO2 + H(+). Its function is as follows. Catalyzes the ferredoxin-dependent oxidative decarboxylation of arylpyruvates. The protein is Indolepyruvate oxidoreductase subunit IorA (iorA) of Methanothermobacter thermautotrophicus (strain ATCC 29096 / DSM 1053 / JCM 10044 / NBRC 100330 / Delta H) (Methanobacterium thermoautotrophicum).